Consider the following 420-residue polypeptide: Corticotropin-releasing factor receptor 1 (420 aa).

The first 28 residues, 1 to 28, serve as a signal peptide directing secretion; the sequence is MVPGPRPALLLLLFLLQAFLLWDSPVAA. The Extracellular segment spans residues 29–116; that stretch reads SIQEQYCESL…CQEILSEEKR (88 aa). Disulfide bonds link cysteine 35–cysteine 59, cysteine 49–cysteine 92, and cysteine 73–cysteine 107. Residues asparagine 43, asparagine 50, asparagine 83, asparagine 95, and asparagine 103 are each glycosylated (N-linked (GlcNAc...) asparagine). A helical membrane pass occupies residues 117-147; it reads SKLHYHIAVIINYLGHCVSLGTLLVAFVLFM. Residues 148 to 154 lie on the Cytoplasmic side of the membrane; that stretch reads RLRSIRC. A helical membrane pass occupies residues 155–179; sequence LRNIIHWNLITAFILRNATWFVVQL. Residues 180-194 are Extracellular-facing; sequence TMNPEVHESNVVWCR. A disulfide bond links cysteine 193 and cysteine 263. A helical membrane pass occupies residues 195 to 223; that stretch reads LVTAAYNYFHVTNFFWMFGEGCYLHTAIV. Residues 224–230 are Cytoplasmic-facing; that stretch reads LTYSTDK. The chain crosses the membrane as a helical span at residues 231 to 258; sequence LRKWMFICIGWCIPFPIIVAWAIGKLYY. Residues 259–274 lie on the Extracellular side of the membrane; that stretch reads DNEKCWFGKRAGVYTD. Residues 275–300 traverse the membrane as a helical segment; it reads YIYQGPMILVLLINFIFLFNIVRILM. At 301–311 the chain is on the cytoplasmic side; the sequence is TKLRASTTSET. A helical transmembrane segment spans residues 312–336; the sequence is IQYRKAVKATLVLLSLLGITYMLFF. The Extracellular segment spans residues 337–343; that stretch reads VNPGEDE. Residues 344-373 traverse the membrane as a helical segment; it reads ISRIVFIYFNSFLESFQGFFVSVFYCFLNS. Residues 374–420 are Cytoplasmic-facing; sequence EVRSAVRKRWHRWQDKHSIRARVARAMSIPTSPTRVSFHSIKQSSAV.

It belongs to the G-protein coupled receptor 2 family. In terms of assembly, interacts (via N-terminal extracellular domain) with CRF and UCN.

Its subcellular location is the cell membrane. In terms of biological role, G-protein coupled receptor for CRH (corticotropin-releasing factor) and UCN (urocortin). Has high affinity for CRH and UCN. Ligand binding causes a conformation change that triggers signaling via guanine nucleotide-binding proteins (G proteins) and down-stream effectors, such as adenylate cyclase. Promotes the activation of adenylate cyclase, leading to increased intracellular cAMP levels. The protein is Corticotropin-releasing factor receptor 1 (CRHR1) of Gallus gallus (Chicken).